Here is a 423-residue protein sequence, read N- to C-terminus: Serine hydroxymethyltransferase (423 aa).

(6S)-5,6,7,8-tetrahydrofolate is bound at residue 121 to 123 (GHI). Lys227 is modified (N6-(pyridoxal phosphate)lysine). Residue Glu242 coordinates (6S)-5,6,7,8-tetrahydrofolate.

The protein belongs to the SHMT family. Homodimer. Requires pyridoxal 5'-phosphate as cofactor.

Its subcellular location is the cytoplasm. The enzyme catalyses 5,10-methylenetetrahydromethanopterin + glycine + H2O = 5,6,7,8-tetrahydromethanopterin + L-serine. Its pathway is amino-acid biosynthesis; glycine biosynthesis; glycine from L-serine: step 1/1. Functionally, catalyzes the reversible interconversion of serine and glycine with tetrahydromethanopterin (H4MPT) serving as the one-carbon carrier. Also exhibits a pteridine-independent aldolase activity toward beta-hydroxyamino acids, producing glycine and aldehydes, via a retro-aldol mechanism. The polypeptide is Serine hydroxymethyltransferase (Methanothermobacter marburgensis (strain ATCC BAA-927 / DSM 2133 / JCM 14651 / NBRC 100331 / OCM 82 / Marburg) (Methanobacterium thermoautotrophicum)).